The following is a 126-amino-acid chain: Probable 4-amino-4-deoxy-L-arabinose-phosphoundecaprenol flippase subunit ArnF (126 aa).

Over 1–4 the chain is Cytoplasmic; that stretch reads MKGY. The chain crosses the membrane as a helical span at residues 5–25; it reads IWGLISVLLVTIAQLLLKWGV. The Periplasmic portion of the chain corresponds to 26–49; it reads VNLPALNLGLHWFDIEWLWSHRHS. Residues 50–70 traverse the membrane as a helical segment; sequence LVAVMAGLAGYLLSMLCWLFT. The Cytoplasmic portion of the chain corresponds to 71 to 79; sequence LKYLPLNKA. The chain crosses the membrane as a helical span at residues 80 to 100; it reads YPLISLSYVFVYLMVALLPWF. The Periplasmic portion of the chain corresponds to 101 to 102; it reads NE. Residues 103–123 form a helical membrane-spanning segment; sequence TITLLKTAGVIFILYGVWLIS. The Cytoplasmic portion of the chain corresponds to 124 to 126; the sequence is RPE.

This sequence belongs to the ArnF family. Heterodimer of ArnE and ArnF.

The protein localises to the cell inner membrane. It participates in bacterial outer membrane biogenesis; lipopolysaccharide biosynthesis. Its function is as follows. Translocates 4-amino-4-deoxy-L-arabinose-phosphoundecaprenol (alpha-L-Ara4N-phosphoundecaprenol) from the cytoplasmic to the periplasmic side of the inner membrane. The chain is Probable 4-amino-4-deoxy-L-arabinose-phosphoundecaprenol flippase subunit ArnF from Photorhabdus laumondii subsp. laumondii (strain DSM 15139 / CIP 105565 / TT01) (Photorhabdus luminescens subsp. laumondii).